A 499-amino-acid polypeptide reads, in one-letter code: U4/U6 small nuclear ribonucleoprotein Prp31 (499 aa).

A disordered region spans residues 1–37 (MSLADELLADLEEAAEEEEGGSYGEEEEEPAIEDVQE). Positions 7–37 (LLADLEEAAEEEEGGSYGEEEEEPAIEDVQE) are enriched in acidic residues. Coiled-coil stretches lie at residues 85 to 120 (EAAPEYRVIVDANNLTVEIENELNIIHKFIRDKYSK) and 181 to 215 (EEELERLEEACDMALELNASKHRIYEYVESRMSFI). Positions 215–333 (IAPNLSIIIG…IERKFDKWQE (119 aa)) constitute a Nop domain. The tract at residues 334–357 (PPPVKQVKPLPAPLDGQRKKRGGR) is disordered. The Nuclear localization signal (NLS) signature appears at 351-364 (RKKRGGRRYRKMKE). Residues Ser-379, Ser-395, and Ser-432 each carry the phosphoserine modification. Lys-438 carries the post-translational modification N6-acetyllysine. The residue at position 439 (Ser-439) is a Phosphoserine. Thr-440 carries the phosphothreonine modification. A Phosphoserine modification is found at Ser-450. A Phosphothreonine modification is found at Thr-455. Glycyl lysine isopeptide (Lys-Gly) (interchain with G-Cter in SUMO2) cross-links involve residues Lys-471 and Lys-478.

The protein belongs to the PRP31 family. As to quaternary structure, identified in the spliceosome B complex. Component of the U4/U6-U5 tri-snRNP complex composed of the U4, U6 and U5 snRNAs and at least PRPF3, PRPF4, PRPF6, PRPF8, PRPF31, SNRNP200, TXNL4A, SNRNP40, DDX23, CD2BP2, PPIH, SNU13, EFTUD2, SART1 and USP39. Interacts with a complex formed by SNU13 and U4 snRNA, but not with SNU13 or U4 snRNA alone. The complex formed by SNU13 and PRPF31 also binds U4atac snRNA, a characteristic component of specific, less abundant spliceosomal complexes. Interacts with PRPF6/U5 snRNP-associated 102 kDa protein. Component of some MLL1/MLL complex, at least composed of the core components KMT2A/MLL1, ASH2L, HCFC1/HCF1, WDR5 and RBBP5, as well as the facultative components BACC1, CHD8, E2F6, HSP70, INO80C, KANSL1, LAS1L, MAX, MCRS1, MGA, KAT8/MOF, PELP1, PHF20, PRP31, RING2, RUVB1/TIP49A, RUVB2/TIP49B, SENP3, TAF1, TAF4, TAF6, TAF7, TAF9 and TEX10. Interacts (via its NLS) with CTNNBL1. Interacts with USH1G. In terms of processing, phosphorylated by PRP4K during spliceosome assembly. As to expression, ubiquitously expressed.

Its subcellular location is the nucleus. It localises to the nucleus speckle. The protein resides in the cajal body. Involved in pre-mRNA splicing as component of the spliceosome. Required for the assembly of the U4/U5/U6 tri-snRNP complex, one of the building blocks of the spliceosome. In Homo sapiens (Human), this protein is U4/U6 small nuclear ribonucleoprotein Prp31.